The following is a 255-amino-acid chain: 5'-nucleotidase SurE (255 aa).

Residues aspartate 8, aspartate 9, serine 40, and asparagine 92 each coordinate a divalent metal cation.

This sequence belongs to the SurE nucleotidase family. A divalent metal cation serves as cofactor.

It is found in the cytoplasm. It catalyses the reaction a ribonucleoside 5'-phosphate + H2O = a ribonucleoside + phosphate. Functionally, nucleotidase that shows phosphatase activity on nucleoside 5'-monophosphates. This Brucella suis (strain ATCC 23445 / NCTC 10510) protein is 5'-nucleotidase SurE.